A 438-amino-acid chain; its full sequence is Ribosomal protein uS12 methylthiotransferase RimO (438 aa).

The MTTase N-terminal domain occupies 4-114 (PRVSFVSLGC…VMNAVHEVAP (111 aa)). Positions 13, 49, 78, 146, 150, and 153 each coordinate [4Fe-4S] cluster. The Radical SAM core domain maps to 132-370 (LTPRHYAYLK…MAKQQQISTN (239 aa)). In terms of domain architecture, TRAM spans 373-438 (KKKVGKRLPV…DAYDLHGTAV (66 aa)).

It belongs to the methylthiotransferase family. RimO subfamily. [4Fe-4S] cluster is required as a cofactor.

It is found in the cytoplasm. It carries out the reaction L-aspartate(89)-[ribosomal protein uS12]-hydrogen + (sulfur carrier)-SH + AH2 + 2 S-adenosyl-L-methionine = 3-methylsulfanyl-L-aspartate(89)-[ribosomal protein uS12]-hydrogen + (sulfur carrier)-H + 5'-deoxyadenosine + L-methionine + A + S-adenosyl-L-homocysteine + 2 H(+). Functionally, catalyzes the methylthiolation of an aspartic acid residue of ribosomal protein uS12. This is Ribosomal protein uS12 methylthiotransferase RimO from Brucella ovis (strain ATCC 25840 / 63/290 / NCTC 10512).